The primary structure comprises 216 residues: Thymidylate kinase (216 aa).

10-17 (GVDGSGKT) contributes to the ATP binding site.

It belongs to the thymidylate kinase family.

It catalyses the reaction dTMP + ATP = dTDP + ADP. Phosphorylation of dTMP to form dTDP in both de novo and salvage pathways of dTTP synthesis. The chain is Thymidylate kinase from Pelotomaculum thermopropionicum (strain DSM 13744 / JCM 10971 / SI).